We begin with the raw amino-acid sequence, 478 residues long: Kynureninase (478 aa).

Pyridoxal 5'-phosphate is bound by residues Leu138, Thr139, 166 to 169 (FPSD), Asp252, His255, and Tyr277. Lys278 carries the N6-(pyridoxal phosphate)lysine modification. Trp315 and Asn343 together coordinate pyridoxal 5'-phosphate.

The protein belongs to the kynureninase family. Homodimer. It depends on pyridoxal 5'-phosphate as a cofactor.

The protein resides in the cytoplasm. It catalyses the reaction L-kynurenine + H2O = anthranilate + L-alanine + H(+). It carries out the reaction 3-hydroxy-L-kynurenine + H2O = 3-hydroxyanthranilate + L-alanine + H(+). It functions in the pathway amino-acid degradation; L-kynurenine degradation; L-alanine and anthranilate from L-kynurenine: step 1/1. The protein operates within cofactor biosynthesis; NAD(+) biosynthesis; quinolinate from L-kynurenine: step 2/3. In terms of biological role, catalyzes the cleavage of L-kynurenine (L-Kyn) and L-3-hydroxykynurenine (L-3OHKyn) into anthranilic acid (AA) and 3-hydroxyanthranilic acid (3-OHAA), respectively. The protein is Kynureninase of Coccidioides immitis (strain RS) (Valley fever fungus).